Consider the following 415-residue polypeptide: Probable G-protein coupled receptor 19 (415 aa).

The Extracellular portion of the chain corresponds to 1–69; the sequence is MVFAHRMDND…LNPGEVATAS (69 aa). Residues N25 and N52 are each glycosylated (N-linked (GlcNAc...) asparagine). The helical transmembrane segment at 70 to 90 threads the bilayer; the sequence is IFFGALWLFSIFGNSLVCLVI. At 91 to 102 the chain is on the cytoplasmic side; that stretch reads HRSRRTQSTTNY. Residues 103-123 traverse the membrane as a helical segment; the sequence is FVVSMACADLLISVASTPFVV. Residues 124 to 152 are Extracellular-facing; sequence LQFTTGRWTLGSAMCKVVRYFQYLTPGVQ. C138 and C210 form a disulfide bridge. A helical transmembrane segment spans residues 153 to 173; sequence IYVLLSICIDRFYTIVYPLSF. Residues 174–182 lie on the Cytoplasmic side of the membrane; it reads KVSREKAKK. A helical membrane pass occupies residues 183–203; sequence MIAASWILDAAFVTPVFFFYG. The Extracellular segment spans residues 204 to 221; it reads SNWDSHCNYFLPPSWEGT. A helical transmembrane segment spans residues 222–242; that stretch reads AYTVIHFLVGFVIPSILIILF. Over 243–277 the chain is Cytoplasmic; it reads YQKVIKYIWRIGTDGRTLRRTMNIVPRTKVKTVKM. The helical transmembrane segment at 278 to 298 threads the bilayer; the sequence is FLLLNLVFLFSWLPFHVAQLW. Topologically, residues 299–309 are extracellular; it reads HPHEQDYKKSS. A helical transmembrane segment spans residues 310-332; it reads LVFTAVTWVSFSSSASKPTLYSI. At 333-415 the chain is on the cytoplasmic side; that stretch reads YNANFRRGMK…INSNPPNTFV (83 aa).

Belongs to the G-protein coupled receptor 1 family. As to expression, strongly expressed in the brain.

Its subcellular location is the cell membrane. Functionally, G-protein coupled receptor that plays a role in the regulation of circadian rhythms and energy metabolism. Participates in maintaining proper circadian gene expression in the suprachiasmatic nucleus (SCN), the locus of the master circadian clock in the brain. May function as a coordinator of aging-associated metabolic dysfunction, stress response, DNA integrity management, and eventual senescence. Upon binding to adropin, modulates mitochondrial energy metabolism via the p44/42-PDK4 signaling pathway, influencing pyruvate dehydrogenase activity. The sequence is that of Probable G-protein coupled receptor 19 (Gpr19) from Mus musculus (Mouse).